The primary structure comprises 611 residues: MFS siderochrome iron transporter C (611 aa).

The disordered stretch occupies residues 1–25 (MPFLDHRTGPSYGTIDQMEQHSDDE). N-linked (GlcNAc...) asparagine glycosylation is present at asparagine 62. The next 14 membrane-spanning stretches (helical) occupy residues 71 to 91 (VIAY…GQTV), 107 to 127 (LIST…PPMA), 136 to 156 (FEAF…MAAS), 165 to 185 (AQIF…VFIA), 194 to 214 (AFLA…GPTI), 228 to 248 (YGMW…SLLL), 282 to 302 (MGGL…LTLA), 313 to 333 (SIVA…FWES), 353 to 373 (ALAG…SVQP), 393 to 413 (VTQT…ILIK), 418 to 438 (YRAF…LMMV), 449 to 469 (ILVT…PVQL), 486 to 506 (MFLT…GAVW), and 560 to 580 (LLIL…AMED). A disordered region spans residues 592 to 611 (VDPVPAEEGEIEPNRHVKRT).

This sequence belongs to the major facilitator superfamily.

It is found in the membrane. Its function is as follows. Major facilitator transporter that contributes to the maintenance of intracellular siderophore ferricrocin (FC) levels. Plays a role in conidiation and confers protection against oxidative stress. Also contributes to fungal virulence in the Galleria mellonella animal model system. Does not appear to play a role in either siderophore export or uptake. This chain is MFS siderochrome iron transporter C, found in Aspergillus fumigatus (strain ATCC MYA-4609 / CBS 101355 / FGSC A1100 / Af293) (Neosartorya fumigata).